The sequence spans 637 residues: Phospholipase B (637 aa).

Positions 1-19 (MSIATATFAFSLFATIAFA) are cleaved as a signal peptide. In terms of domain architecture, PLA2c spans 46 to 572 (DCPSNVTWIR…DTWCWAGDDN (527 aa)). 17 N-linked (GlcNAc...) asparagine glycosylation sites follow: Asn50, Asn56, Asn122, Asn231, Asn246, Asn272, Asn314, Asn343, Asn387, Asn433, Asn481, Asn501, Asn528, Asn553, Asn572, Asn594, and Asn606.

Belongs to the lysophospholipase family. In terms of processing, N-glycosylated.

It localises to the secreted. The protein localises to the cell membrane. It carries out the reaction a 1-acyl-sn-glycero-3-phosphocholine + H2O = sn-glycerol 3-phosphocholine + a fatty acid + H(+). With respect to regulation, inhibited by Fe(3+) ion. Functionally, exhibits phospholipase B (PLB), lysophospholipase (LPL) and lysophospholipase/transacylase (LPTA) activities. The sequence is that of Phospholipase B (PLB1) from Cryptococcus neoformans var. grubii serotype A (strain H99 / ATCC 208821 / CBS 10515 / FGSC 9487) (Filobasidiella neoformans var. grubii).